Consider the following 193-residue polypeptide: Probable nicotinate-nucleotide adenylyltransferase (193 aa).

Belongs to the NadD family.

It catalyses the reaction nicotinate beta-D-ribonucleotide + ATP + H(+) = deamido-NAD(+) + diphosphate. It functions in the pathway cofactor biosynthesis; NAD(+) biosynthesis; deamido-NAD(+) from nicotinate D-ribonucleotide: step 1/1. Catalyzes the reversible adenylation of nicotinate mononucleotide (NaMN) to nicotinic acid adenine dinucleotide (NaAD). The protein is Probable nicotinate-nucleotide adenylyltransferase of Flavobacterium johnsoniae (strain ATCC 17061 / DSM 2064 / JCM 8514 / BCRC 14874 / CCUG 350202 / NBRC 14942 / NCIMB 11054 / UW101) (Cytophaga johnsonae).